The following is a 212-amino-acid chain: Ribosomal RNA small subunit methyltransferase G (212 aa).

S-adenosyl-L-methionine is bound by residues Gly80, Leu85, 131 to 132, and Arg146; that span reads AE.

Belongs to the methyltransferase superfamily. RNA methyltransferase RsmG family.

The protein resides in the cytoplasm. It catalyses the reaction guanosine(527) in 16S rRNA + S-adenosyl-L-methionine = N(7)-methylguanosine(527) in 16S rRNA + S-adenosyl-L-homocysteine. Functionally, specifically methylates the N7 position of guanine in position 527 of 16S rRNA. The chain is Ribosomal RNA small subunit methyltransferase G from Xanthomonas axonopodis pv. citri (strain 306).